Here is a 464-residue protein sequence, read N- to C-terminus: Soluble pyridine nucleotide transhydrogenase (464 aa).

Residue 35–44 (EASSQVGGSC) participates in FAD binding.

The protein belongs to the class-I pyridine nucleotide-disulfide oxidoreductase family. FAD serves as cofactor.

It is found in the cytoplasm. It catalyses the reaction NAD(+) + NADPH = NADH + NADP(+). Its function is as follows. Conversion of NADPH, generated by peripheral catabolic pathways, to NADH, which can enter the respiratory chain for energy generation. The chain is Soluble pyridine nucleotide transhydrogenase from Marinomonas sp. (strain MWYL1).